Consider the following 509-residue polypeptide: 2-isopropylmalate synthase (509 aa).

Residues 5 to 267 (IQIFDTTLRD…QTALNLEETK (263 aa)) form the Pyruvate carboxyltransferase domain. Positions 14, 202, 204, and 238 each coordinate Mn(2+). The regulatory domain stretch occupies residues 391–509 (KLETLQLQYV…AAENVEKVGN (119 aa)).

The protein belongs to the alpha-IPM synthase/homocitrate synthase family. LeuA type 1 subfamily. Homodimer. Requires Mn(2+) as cofactor.

The protein localises to the cytoplasm. It carries out the reaction 3-methyl-2-oxobutanoate + acetyl-CoA + H2O = (2S)-2-isopropylmalate + CoA + H(+). The protein operates within amino-acid biosynthesis; L-leucine biosynthesis; L-leucine from 3-methyl-2-oxobutanoate: step 1/4. In terms of biological role, catalyzes the condensation of the acetyl group of acetyl-CoA with 3-methyl-2-oxobutanoate (2-ketoisovalerate) to form 3-carboxy-3-hydroxy-4-methylpentanoate (2-isopropylmalate). The polypeptide is 2-isopropylmalate synthase (Staphylococcus aureus (strain MRSA252)).